The sequence spans 363 residues: tRNA(Met) cytidine acetate ligase (363 aa).

Residues 7 to 20 (IAEF…HKYL), glycine 96, asparagine 152, and arginine 175 contribute to the ATP site.

Belongs to the TmcAL family.

It localises to the cytoplasm. It catalyses the reaction cytidine(34) in elongator tRNA(Met) + acetate + ATP = N(4)-acetylcytidine(34) in elongator tRNA(Met) + AMP + diphosphate. Functionally, catalyzes the formation of N(4)-acetylcytidine (ac(4)C) at the wobble position of elongator tRNA(Met), using acetate and ATP as substrates. First activates an acetate ion to form acetyladenylate (Ac-AMP) and then transfers the acetyl group to tRNA to form ac(4)C34. This chain is tRNA(Met) cytidine acetate ligase, found in Streptococcus thermophilus (strain ATCC BAA-250 / LMG 18311).